The primary structure comprises 299 residues: Regucalcin (299 aa).

Glutamate 18 contributes to the a divalent metal cation binding site. 3 residues coordinate substrate: arginine 101, asparagine 103, and glutamate 121. The residue at position 144 (lysine 144) is an N6-succinyllysine. Residues asparagine 154 and aspartate 204 each coordinate a divalent metal cation. The active-site Proton donor/acceptor is the aspartate 204. N6-succinyllysine is present on residues lysine 244 and lysine 253.

This sequence belongs to the SMP-30/CGR1 family. As to quaternary structure, monomer. Zn(2+) serves as cofactor. It depends on Mn(2+) as a cofactor. Requires Ca(2+) as cofactor. The cofactor is Mg(2+).

Its subcellular location is the cytoplasm. The enzyme catalyses D-glucono-1,5-lactone + H2O = D-gluconate + H(+). Gluconolactonase with low activity towards other sugar lactones, including gulonolactone and galactonolactone. Can also hydrolyze diisopropyl phosphorofluoridate and phenylacetate (in vitro). Calcium-binding protein. Modulates Ca(2+) signaling, and Ca(2+)-dependent cellular processes and enzyme activities. The sequence is that of Regucalcin (RGN) from Macaca fascicularis (Crab-eating macaque).